We begin with the raw amino-acid sequence, 883 residues long: Alanine--tRNA ligase (883 aa).

Zn(2+)-binding residues include His-560, His-564, Cys-665, and His-669.

This sequence belongs to the class-II aminoacyl-tRNA synthetase family. Requires Zn(2+) as cofactor.

The protein localises to the cytoplasm. The catalysed reaction is tRNA(Ala) + L-alanine + ATP = L-alanyl-tRNA(Ala) + AMP + diphosphate. Functionally, catalyzes the attachment of alanine to tRNA(Ala) in a two-step reaction: alanine is first activated by ATP to form Ala-AMP and then transferred to the acceptor end of tRNA(Ala). Also edits incorrectly charged Ser-tRNA(Ala) and Gly-tRNA(Ala) via its editing domain. This is Alanine--tRNA ligase from Mesomycoplasma hyopneumoniae (strain J / ATCC 25934 / NCTC 10110) (Mycoplasma hyopneumoniae).